A 294-amino-acid chain; its full sequence is Shikimate dehydrogenase (NADP(+)) (294 aa).

Shikimate is bound by residues 14–16 and Thr-61; that span reads SKS. Lys-65 serves as the catalytic Proton acceptor. Residue Asp-77 participates in NADP(+) binding. Shikimate contacts are provided by Asn-86 and Asp-102. NADP(+) is bound by residues 140-144 and Leu-235; that span reads GSGGA. Tyr-237 provides a ligand contact to shikimate. Gly-259 provides a ligand contact to NADP(+).

Belongs to the shikimate dehydrogenase family. As to quaternary structure, homodimer.

The enzyme catalyses shikimate + NADP(+) = 3-dehydroshikimate + NADPH + H(+). It functions in the pathway metabolic intermediate biosynthesis; chorismate biosynthesis; chorismate from D-erythrose 4-phosphate and phosphoenolpyruvate: step 4/7. Its function is as follows. Involved in the biosynthesis of the chorismate, which leads to the biosynthesis of aromatic amino acids. Catalyzes the reversible NADPH linked reduction of 3-dehydroshikimate (DHSA) to yield shikimate (SA). This chain is Shikimate dehydrogenase (NADP(+)), found in Blochmanniella floridana.